A 210-amino-acid polypeptide reads, in one-letter code: Small ribosomal subunit protein uS3 (210 aa).

The KH type-2 domain maps to 38 to 106; sequence LRSFLKKRLY…EVYLNIQEVR (69 aa).

Belongs to the universal ribosomal protein uS3 family. As to quaternary structure, part of the 30S ribosomal subunit. Forms a tight complex with proteins S10 and S14.

Binds the lower part of the 30S subunit head. Binds mRNA in the 70S ribosome, positioning it for translation. This Geotalea uraniireducens (strain Rf4) (Geobacter uraniireducens) protein is Small ribosomal subunit protein uS3.